The following is a 373-amino-acid chain: Protodeoxyviolaceinate monooxygenase (373 aa).

An FAD-binding site is contributed by 2-20; the sequence is KILVIGAGPAGLVFASQLK.

FAD serves as cofactor.

The catalysed reaction is protodeoxyviolaceinate + NADH + O2 + H(+) = protoviolaceinate + NAD(+) + H2O. It carries out the reaction protodeoxyviolaceinate + NADPH + O2 + H(+) = protoviolaceinate + NADP(+) + H2O. It participates in pigment biosynthesis; violacein biosynthesis. Functionally, catalyzes the oxygenation of the 6-position of protodeoxyviolaceinate to form proviolacein. The polypeptide is Protodeoxyviolaceinate monooxygenase (vioD) (Chromobacterium violaceum (strain ATCC 12472 / DSM 30191 / JCM 1249 / CCUG 213 / NBRC 12614 / NCIMB 9131 / NCTC 9757 / MK)).